Reading from the N-terminus, the 279-residue chain is Four and a half LIM domains protein 2 (279 aa).

A C4-type zinc finger spans residues 7–31 (CHHCNESLYGKKYILKEENPHCVAC). LIM zinc-binding domains lie at 40–92 (CEEC…CTDC), 101–153 (CQEC…CVPC), and 162–212 (CVQC…CLTC). K78 is covalently cross-linked (Glycyl lysine isopeptide (Lys-Gly) (interchain with G-Cter in SUMO2)). Glycyl lysine isopeptide (Lys-Gly) (interchain with G-Cter in SUMO2) cross-links involve residues K167 and K220. Positions 221–275 (CAGCTNPISGLGGTKYISFEERQWHNDCFNCKKCSLSLVGRGFLTERDDILCPDC) constitute an LIM zinc-binding 4 domain. S238 bears the Phosphoserine mark.

Interacts with ZNF638 and TTN/titin. Interacts with E4F1. Interacts with GRB7. Interacts with SIRT1 and FOXO1. Interacts with CEFIP and calcineurin. Interacts with FOXK1. As to expression, expressed in heart only (at protein level).

The protein resides in the cytoplasm. Its subcellular location is the nucleus. It is found in the myofibril. It localises to the sarcomere. The protein localises to the z line. Its function is as follows. May function as a molecular transmitter linking various signaling pathways to transcriptional regulation. Negatively regulates the transcriptional repressor E4F1 and may function in cell growth. Inhibits the transcriptional activity of FOXO1 and its apoptotic function by enhancing the interaction of FOXO1 with SIRT1 and FOXO1 deacetylation. Negatively regulates the calcineurin/NFAT signaling pathway in cardiomyocytes. In Rattus norvegicus (Rat), this protein is Four and a half LIM domains protein 2 (Fhl2).